Here is a 308-residue protein sequence, read N- to C-terminus: Ribosomal protein L11 methyltransferase (308 aa).

Residues T148, G169, D191, and N239 each coordinate S-adenosyl-L-methionine.

It belongs to the methyltransferase superfamily. PrmA family.

Its subcellular location is the cytoplasm. It catalyses the reaction L-lysyl-[protein] + 3 S-adenosyl-L-methionine = N(6),N(6),N(6)-trimethyl-L-lysyl-[protein] + 3 S-adenosyl-L-homocysteine + 3 H(+). In terms of biological role, methylates ribosomal protein L11. The chain is Ribosomal protein L11 methyltransferase from Psychrobacter arcticus (strain DSM 17307 / VKM B-2377 / 273-4).